The sequence spans 686 residues: MKIQDRSLLIFLVLGILKSDAFNTRVKRHAPIRFQRSTRQSVVHFEFLDQEYVVDLEPNHSTFHENFKVFTQDGPQIVPRDEYIGTVREPRAGRAVLTQLEENVYIGSLYFVDDTLHLEPSYPHQLSDDLGPVVGYFESDLDLNLDLSAMPVRNQVSFRRANPFLKHRRAIAIPSDRRKDVLNVKRNRCTLKLVADYSFYSIFGKNNTGIVTKFLVNMIARVNEIYTPINWDVGKEDDISGRGRFQNMGFSIKEIKVLDRPNASDSHYNSYSRIWEVERLLREFAFAEGSKDFCLVHLVTARTFREVATLGLAYVSYKKWDETAGGICSKQETFNGRVAYINVLLSTSFANSEQSTYPLITKEIDIVVSHEYGHAWGATHDPTIDSDDPDVEECSPNDQNGGKYLMSQYAQKGYDANNVLFSPCSRKLIRDVLIGKWESCFQEEMTSFCGNGIVEDGEECDNGVDTDNEFNCCDKFCRLAVGAKCSPLNHICCTPTCQFHNSTHVCLPGDSLLCKADAVCNGFSGECPSAPPVRDGQECLEGGECLNGVCLPFCEKMSIGKKSCICEDLELSCRLCCRDYNGTCAPVPGHVYLRDGVRCSKGSCRDRKCVNEVVDNVRNYFLITFQTTGGVLEFIKTHIVVIAIIFFTLIFVGIYKIVKYGENFTEKVTHKTAGGCRSVFVKADVN.

Positions 1 to 21 are cleaved as a signal peptide; sequence MKIQDRSLLIFLVLGILKSDA. The propeptide occupies 22 to 177; sequence FNTRVKRHAP…RRAIAIPSDR (156 aa). N-linked (GlcNAc...) asparagine glycosylation is found at asparagine 59, asparagine 206, and asparagine 262. The Extracellular portion of the chain corresponds to 178 to 637; the sequence is RKDVLNVKRN…TGGVLEFIKT (460 aa). In terms of domain architecture, Peptidase M12B spans 187 to 445; that stretch reads NRCTLKLVAD…KWESCFQEEM (259 aa). Intrachain disulfides connect cysteine 328-cysteine 440 and cysteine 394-cysteine 424. Histidine 370 lines the Zn(2+) pocket. Residue glutamate 371 is part of the active site. Zn(2+)-binding residues include histidine 374 and histidine 380. Residues 446 to 535 enclose the Disintegrin domain; the sequence is TSFCGNGIVE…ECPSAPPVRD (90 aa). Residue asparagine 501 is glycosylated (N-linked (GlcNAc...) asparagine). Cysteine 506 and cysteine 527 are disulfide-bonded. Asparagine 581 is a glycosylation site (N-linked (GlcNAc...) asparagine). The chain crosses the membrane as a helical span at residues 638-658; it reads HIVVIAIIFFTLIFVGIYKIV. At 659–686 the chain is on the cytoplasmic side; sequence KYGENFTEKVTHKTAGGCRSVFVKADVN.

The cofactor is Zn(2+).

It is found in the cell membrane. Metalloprotease. Acts together with protease sup-17 to facilitate lin-12/Notch signaling during developmental cell fate decision, including anchor cell/ventral uterine precursor cell decision. By modulating glp-1/Notch signaling, plays a role in germline development. The chain is Disintegrin and metalloproteinase domain-containing protein 17 homolog from Caenorhabditis elegans.